The chain runs to 194 residues: Histone H1.0 (194 aa).

Met1 carries the N-acetylmethionine modification. Over residues 1 to 11 the composition is skewed to low complexity; it reads MTENSTSAPAA. The tract at residues 1-29 is disordered; sequence MTENSTSAPAAKPKRAKASKKSTDHPKYS. The residue at position 2 (Thr2) is an N-acetylthreonine; in Histone H1.0, N-terminally processed. The H15 domain occupies 24-97; the sequence is DHPKYSDMVV…GASGSFRLAK (74 aa). Residue Arg42 is modified to Citrulline. A disordered region spans residues 84 to 194; the sequence is TKGVGASGSF…SSAKRAGKKK (111 aa). An ADP-ribosylserine modification is found at Ser104. The segment covering 105 to 194 has biased composition (basic residues); sequence VAFKKTKKEI…SSAKRAGKKK (90 aa).

It belongs to the histone H1/H5 family. In terms of processing, ADP-ribosylated on Ser-104 in response to DNA damage.

It localises to the nucleus. Its subcellular location is the chromosome. Histones H1 are necessary for the condensation of nucleosome chains into higher-order structures. The histones H1.0 are found in cells that are in terminal stages of differentiation or that have low rates of cell division. The polypeptide is Histone H1.0 (H1-0) (Pongo abelii (Sumatran orangutan)).